A 265-amino-acid polypeptide reads, in one-letter code: Undecaprenyl-diphosphatase 1 (265 aa).

The next 7 membrane-spanning stretches (helical) occupy residues 4-24 (IITAFILGIVEGLAEFLPISS), 42-62 (AKTFEIVIQLGAILAIAILYH), 84-104 (FHVFLGVFPAVVAGLLLHDVI), 108-128 (LFQPYTVVIGLVAGAILMIFA), 184-204 (SEFSFLIALPVMVGATGLDLL), 217-237 (MFAVGFITSFIVAMLAVVTFL), and 245-265 (LKPFAYYRILLAILFTVFVLL).

It belongs to the UppP family.

The protein resides in the cell membrane. It catalyses the reaction di-trans,octa-cis-undecaprenyl diphosphate + H2O = di-trans,octa-cis-undecaprenyl phosphate + phosphate + H(+). Its function is as follows. Catalyzes the dephosphorylation of undecaprenyl diphosphate (UPP). Confers resistance to bacitracin. This Bacillus anthracis protein is Undecaprenyl-diphosphatase 1.